The primary structure comprises 214 residues: Small ribosomal subunit protein eS6 (214 aa).

Belongs to the eukaryotic ribosomal protein eS6 family.

The protein is Small ribosomal subunit protein eS6 of Saccharolobus islandicus (strain L.S.2.15 / Lassen #1) (Sulfolobus islandicus).